A 442-amino-acid polypeptide reads, in one-letter code: MFS transporter asaE (442 aa).

The segment covering 1-10 has biased composition (polar residues); it reads MDRSRTSSQG. Positions 1-43 are disordered; that stretch reads MDRSRTSSQGRDVLPPRGDEGRISPSLDKEKSPGPEDQPDAPP. The span at 17 to 34 shows a compositional bias: basic and acidic residues; sequence RGDEGRISPSLDKEKSPG. 12 helical membrane-spanning segments follow: residues 47–67, 89–109, 119–139, 150–170, 177–197, 206–226, 252–272, 288–307, 319–339, 342–362, 381–401, and 413–433; these read LTAW…FGWV, TISW…PIVG, YLII…SIST, ICSA…VSAW, IAFA…PIMV, FGWS…IAIV, PVFI…FIPI, LASY…RLGA, IFIV…IPAT, APII…VSLS, LLFL…GAIL, and IFSG…RIVG.

This sequence belongs to the major facilitator superfamily. Monocarboxylate porter (TC 2.A.1.13) family.

It is found in the cell membrane. It functions in the pathway secondary metabolite biosynthesis. MFS transporter; part of the gene cluster that mediates the biosynthesis of aspergillic acid. Probably involved in aspergillic acid metabolism and transport. In Aspergillus flavus (strain ATCC 200026 / FGSC A1120 / IAM 13836 / NRRL 3357 / JCM 12722 / SRRC 167), this protein is MFS transporter asaE.